A 170-amino-acid chain; its full sequence is MPRSQKNDNFIDKTFTIIADILLQIIPTTQREKEAFTHYRDGMSAQSEGEYAEALQNYYEAMRLEIDPYDRSYILYNIGLIHTSNGEHAKALEYYFQALERNSSLPQALNNMAVICHYRGEQAIEEGDPETCEVWFDQAADYWKKAISLAPSNYIEAQNWLRITGRSKIK.

TPR repeat units follow at residues 35-68 (AFTHYRDGMSAQSEGEYAEALQNYYEAMRLEIDP), 72-105 (SYILYNIGLIHTSNGEHAKALEYYFQALERNSSL), and 120-153 (GEQAIEEGDPETCEVWFDQAADYWKKAISLAPSN).

This sequence belongs to the Ycf3 family.

The protein resides in the plastid. It is found in the chloroplast thylakoid membrane. Its function is as follows. Essential for the assembly of the photosystem I (PSI) complex. May act as a chaperone-like factor to guide the assembly of the PSI subunits. The polypeptide is Photosystem I assembly protein Ycf3 (Anthoceros angustus (Hornwort)).